Here is a 184-residue protein sequence, read N- to C-terminus: Urease accessory protein UreE (184 aa).

The segment at 147-184 (EHHGHSHSHSHSHDHDHDHDHDHQHGPSCSHGHHHGHR) is disordered. A compositionally biased stretch (basic and acidic residues) spans 157–171 (HSHDHDHDHDHDHQH).

The protein belongs to the UreE family.

The protein resides in the cytoplasm. Its function is as follows. Involved in urease metallocenter assembly. Binds nickel. Probably functions as a nickel donor during metallocenter assembly. This is Urease accessory protein UreE from Burkholderia mallei (strain ATCC 23344).